We begin with the raw amino-acid sequence, 148 residues long: FAD synthase (148 aa).

Residues 9–10 (TF), 14–17 (HPGH), N92, and Y119 contribute to the ATP site.

It belongs to the archaeal FAD synthase family. As to quaternary structure, homodimer. Requires a divalent metal cation as cofactor.

The enzyme catalyses FMN + ATP + H(+) = FAD + diphosphate. It participates in cofactor biosynthesis; FAD biosynthesis; FAD from FMN: step 1/1. Functionally, catalyzes the transfer of the AMP portion of ATP to flavin mononucleotide (FMN) to produce flavin adenine dinucleotide (FAD) coenzyme. This Methanolacinia petrolearia (strain DSM 11571 / OCM 486 / SEBR 4847) (Methanoplanus petrolearius) protein is FAD synthase.